A 1104-amino-acid chain; its full sequence is Extended synaptotagmin-1 (1104 aa).

Residue Met-1 is modified to N-acetylmethionine. The Cytoplasmic segment spans residues 1 to 38; it reads MERSPGEGPSPSPTDQPSAPSDPTGQPPAAHAKPDPGS. Residues 1–47 are disordered; sequence MERSPGEGPSPSPTDQPSAPSDPTGQPPAAHAKPDPGSGGQPAGPGA. The segment covering 15–24 has biased composition (polar residues); that stretch reads DQPSAPSDPT. Gly residues predominate over residues 37 to 47; that stretch reads GSGGQPAGPGA. A helical transmembrane segment spans residues 39–59; the sequence is GGQPAGPGAAGEALAVLTSFG. Topologically, residues 60–62 are lumenal; that stretch reads KRL. A helical membrane pass occupies residues 63–83; sequence LVLIPVYLAGAVGLSVGFVLF. Residues 84-1104 lie on the Cytoplasmic side of the membrane; that stretch reads GLALYLGWRR…LMDDKDKGSS (1021 aa). Residues 91 to 116 adopt a coiled-coil conformation; the sequence is WRRVRDEKERSLRAARQLLDDEEQLT. The region spanning 135–313 is the SMP-LTD domain; sequence DVEKAEWLNK…LPNRLLVPLV (179 aa). C2 domains are found at residues 312 to 433, 460 to 580, 627 to 751, and 777 to 899; these read LVPD…DDWF, QVLQ…QLSS, SVDA…DEWL, and LEEV…TLNS. Ser-324 bears the Phosphoserine; by CDK5 mark. Ca(2+)-binding residues include Lys-344, Asp-345, Asp-357, Asp-404, Asp-406, Asp-408, Asp-410, and Asp-411. Disordered regions lie at residues 617–641, 813–833, and 924–950; these read VDSE…TPDS, RKGT…TSHK, and SHSY…VTSS. N6-acetyllysine is present on Lys-817. 2 positions are modified to phosphoserine: Ser-820 and Ser-941. Over residues 925 to 946 the composition is skewed to low complexity; it reads HSYSHSSSSLSEEPELSGGPPH. Position 948 is a phosphothreonine (Thr-948). Ser-949 and Ser-963 each carry phosphoserine. Positions 971–1093 constitute a C2 5 domain; that stretch reads PLGQVKLTVW…DLSQGVARWY (123 aa). At Tyr-1009 the chain carries Phosphotyrosine. The tract at residues 1018–1025 is required for phosphatidylinositol 4,5-bisphosphate-dependent location at the cell membrane; the sequence is KNRGTKRK. At Ser-1034 the chain carries Phosphoserine.

The protein belongs to the extended synaptotagmin family. In terms of assembly, interacts with ESYT2 and ESYT3. Interacts with ADGRD1; inhibiting the G-protein-coupled receptor activity of ADGRD1. Interaction with ADGRD1 is abolished when cytosolic calcium increases, relieving ADGRD1 G-protein-coupled receptor activity. Interacts (phosphorylated form) with SLC2A4. Post-translationally, phosphorylated on Ser residues in insulin-treated adipocytes (in vitro); this promotes interaction with SLC2A4.

It is found in the endoplasmic reticulum membrane. Its subcellular location is the cell membrane. Functionally, binds calcium (via the C2 domains) and translocates to sites of contact between the endoplasmic reticulum and the cell membrane in response to increased cytosolic calcium levels. Helps tether the endoplasmic reticulum to the cell membrane and promotes the formation of appositions between the endoplasmic reticulum and the cell membrane. Acts as an inhibitor of ADGRD1 G-protein-coupled receptor activity in absence of cytosolic calcium. Binds glycerophospholipids in a barrel-like domain and may play a role in cellular lipid transport. The chain is Extended synaptotagmin-1 (ESYT1) from Pongo abelii (Sumatran orangutan).